Reading from the N-terminus, the 560-residue chain is Probable pectinesterase/pectinesterase inhibitor 20 (560 aa).

The first 24 residues, 1 to 24, serve as a signal peptide directing secretion; the sequence is MSQKLMFLFTLACLSSLPSPFISA. A pectinesterase inhibitor 20 region spans residues 25–179; sequence QIPAIGNATS…TKLYGVSLAL (155 aa). N31, N168, N251, N255, N268, N307, and N314 each carry an N-linked (GlcNAc...) asparagine glycan. Positions 246-544 are pectinesterase 20; that stretch reads VTVIQNGTGN…FTVTNFLVGE (299 aa). Residue T323 participates in substrate binding. Residue N340 is glycosylated (N-linked (GlcNAc...) asparagine). Q353 contributes to the substrate binding site. D376 acts as the Proton donor; for pectinesterase activity in catalysis. C390 and C410 are disulfide-bonded. The active-site Nucleophile; for pectinesterase activity is D397. The segment at 417 to 441 is disordered; that stretch reads PRKGQSNEVTAQGRTDPNQNTGTAI. Polar residues predominate over residues 419 to 439; it reads KGQSNEVTAQGRTDPNQNTGT. N456 is a glycosylation site (N-linked (GlcNAc...) asparagine). 2 residues coordinate substrate: R465 and W467. N-linked (GlcNAc...) asparagine glycans are attached at residues N507, N528, and N534.

The protein in the N-terminal section; belongs to the PMEI family. This sequence in the C-terminal section; belongs to the pectinesterase family. As to expression, expressed in flower buds.

The protein localises to the secreted. Its subcellular location is the cell wall. The catalysed reaction is [(1-&gt;4)-alpha-D-galacturonosyl methyl ester](n) + n H2O = [(1-&gt;4)-alpha-D-galacturonosyl](n) + n methanol + n H(+). It functions in the pathway glycan metabolism; pectin degradation; 2-dehydro-3-deoxy-D-gluconate from pectin: step 1/5. In terms of biological role, acts in the modification of cell walls via demethylesterification of cell wall pectin. The polypeptide is Probable pectinesterase/pectinesterase inhibitor 20 (PME20) (Arabidopsis thaliana (Mouse-ear cress)).